The sequence spans 1138 residues: Myelin regulatory factor (1138 aa).

Residues 1–768 (MEVVDETEAL…CISQRFLQGT (768 aa)) lie on the Cytoplasmic side of the membrane. Disordered regions lie at residues 56-150 (TASF…YSPQ), 171-200 (VSSRLEHPPPPPAHLPGPPPPPPPPPHYPV), 246-267 (AELPPHPSKKRKHSESPPNTLN), and 279-339 (PGTV…SDSL). Residues 67–88 (PGSSGLHHLSPPGSGPSPGRHG) show a composition bias toward low complexity. The residue at position 123 (K123) is an N6-acetyllysine. Residues 178-198 (PPPPPAHLPGPPPPPPPPPHY) are compositionally biased toward pro residues. The segment at residues 250 to 541 (PHPSKKRKHS…SNPGQFESDS (292 aa)) is a DNA-binding region (NDT80). The Nuclear localization signal motif lies at 254–257 (KKRK). A compositionally biased stretch (pro residues) spans 286–302 (PPHPARAPSPPWPPQGP). The span at 329 to 339 (SPGLLQDSDSL) shows a compositional bias: low complexity. The short motif at 491–494 (KKGK) is the Nuclear localization signal element. One can recognise a Peptidase S74 domain in the interval 587 to 696 (SDLRAKEHVQ…KLTDNLETRI (110 aa)). Residues 680–711 (GAVKELCKLTDNLETRIDELERWSHKLAKLRR) are a coiled coil. The span at 721–733 (SGAFSHAGSQFSR) shows a compositional bias: polar residues. The tract at residues 721 to 753 (SGAFSHAGSQFSRAGSVPHKKRPPKLANKSSPA) is disordered. The segment at 765–1003 (LQGTIIALVV…QGQLDPAPSL (239 aa)) is required for interaction with TMEM98. A helical transmembrane segment spans residues 769–789 (IIALVVVMAFSVVSMSTLYVL). Residues 790 to 1138 (SLRSEEDLVD…YYFHFYRLCD (349 aa)) are Lumenal-facing. A compositionally biased stretch (low complexity) spans 891–900 (ATDPALGPTL). 2 disordered regions span residues 891–922 (ATDPALGPTLTPTPSPSSNPKHSGPGQMAPLP) and 951–999 (ASPV…QLDP). 2 stretches are compositionally biased toward polar residues: residues 961 to 974 (QSKTKNSPSFNLQS) and 987 to 999 (PAQFTQTQGQLDP). N1030, N1052, and N1116 each carry an N-linked (GlcNAc...) asparagine glycan.

The protein belongs to the MRF family. In terms of assembly, homotrimer. Interacts (via C-terminal region) with TMEM98; the interaction inhibits MYRF self-cleavage. Post-translationally, glycosylated. In terms of processing, follows autocatalytic cleavage via the peptidase S74 domain. Autoprocessing is apparently constitutive and is essential for transcriptional activity. Autocatalytic cleavage is inhibited by interaction with TMEM98. Specifically expressed by postmitotic oligodendrocytes in the CNS. Not detected in the peripheral nervous system (PNS).

It localises to the endoplasmic reticulum membrane. It is found in the nucleus. Its subcellular location is the cytoplasm. Functionally, constitutes a precursor of the transcription factor. Mediates the autocatalytic cleavage that releases the Myelin regulatory factor, N-terminal component that specifically activates transcription of central nervous system (CNS) myelin genes. Its function is as follows. Membrane-bound part that has no transcription factor activity and remains attached to the endoplasmic reticulum membrane following cleavage. Transcription factor that specifically activates expression of myelin genes such as MBP, MOG, MAG, DUSP15 and PLP1 during oligodendrocyte (OL) maturation, thereby playing a central role in oligodendrocyte maturation and CNS myelination. Specifically recognizes and binds DNA sequence 5'-CTGGYAC-3' in the regulatory regions of myelin-specific genes and directly activates their expression. Not only required during oligodendrocyte differentiation but is also required on an ongoing basis for the maintenance of expression of myelin genes and for the maintenance of a mature, viable oligodendrocyte phenotype. This is Myelin regulatory factor (Myrf) from Mus musculus (Mouse).